The sequence spans 278 residues: NAD-capped RNA hydrolase NudC (278 aa).

Residue Arg84 coordinates substrate. Cys114 and Cys117 together coordinate Zn(2+). Glu127 is a substrate binding site. Residues Cys132 and Cys135 each coordinate Zn(2+). Residue Tyr140 participates in substrate binding. The Nudix hydrolase domain occupies 141 to 265 (PRLSPSMIVL…IARHLIDLYL (125 aa)). A divalent metal cation contacts are provided by Ala174, Glu190, and Glu194. Positions 175 to 196 (GFVEAGESVEQCVVREVREEVG) match the Nudix box motif. 208 to 215 (QNWPFPHS) contacts substrate. Glu235 is an a divalent metal cation binding site. Ala257 lines the substrate pocket.

The protein belongs to the Nudix hydrolase family. NudC subfamily. Homodimer. Requires Mg(2+) as cofactor. Mn(2+) serves as cofactor. It depends on Zn(2+) as a cofactor.

It catalyses the reaction a 5'-end NAD(+)-phospho-ribonucleoside in mRNA + H2O = a 5'-end phospho-adenosine-phospho-ribonucleoside in mRNA + beta-nicotinamide D-ribonucleotide + 2 H(+). The enzyme catalyses NAD(+) + H2O = beta-nicotinamide D-ribonucleotide + AMP + 2 H(+). It carries out the reaction NADH + H2O = reduced beta-nicotinamide D-ribonucleotide + AMP + 2 H(+). Its function is as follows. mRNA decapping enzyme that specifically removes the nicotinamide adenine dinucleotide (NAD) cap from a subset of mRNAs by hydrolyzing the diphosphate linkage to produce nicotinamide mononucleotide (NMN) and 5' monophosphate mRNA. The NAD-cap is present at the 5'-end of some mRNAs and stabilizes RNA against 5'-processing. Has preference for mRNAs with a 5'-end purine. Catalyzes the hydrolysis of a broad range of dinucleotide pyrophosphates. The protein is NAD-capped RNA hydrolase NudC of Pseudomonas aeruginosa (strain ATCC 15692 / DSM 22644 / CIP 104116 / JCM 14847 / LMG 12228 / 1C / PRS 101 / PAO1).